The primary structure comprises 147 residues: MRSLLILVLCFLPLAALGKVFGRCELAAAMKRHGLDNYRGYSLGNWVCAAKFESNFNTQATNRNTDGSTDYGILQINSRWWCNDGRTPGSRNLCNIPCSALLSSDITASVNCAKKIVSDGNGMNAWVAWRNRCKGTDVQAWIRGCRL.

Positions 1-18 (MRSLLILVLCFLPLAALG) are cleaved as a signal peptide. The C-type lysozyme domain occupies 19 to 147 (KVFGRCELAA…VQAWIRGCRL (129 aa)). 4 cysteine pairs are disulfide-bonded: C24/C145, C48/C133, C82/C98, and C94/C112. Catalysis depends on residues E53 and D70. D119 contacts substrate.

This sequence belongs to the glycosyl hydrolase 22 family. As to quaternary structure, monomer. In the egg white and polymorphonuclear leukocytes.

The protein localises to the secreted. It catalyses the reaction Hydrolysis of (1-&gt;4)-beta-linkages between N-acetylmuramic acid and N-acetyl-D-glucosamine residues in a peptidoglycan and between N-acetyl-D-glucosamine residues in chitodextrins.. Lysozymes have primarily a bacteriolytic function; those in tissues and body fluids are associated with the monocyte-macrophage system and enhance the activity of immunoagents. Has bacteriolytic activity against M.luteus. The sequence is that of Lysozyme C (LYZ) from Gallus gallus (Chicken).